A 531-amino-acid chain; its full sequence is Peptide chain release factor 3 (531 aa).

One can recognise a tr-type G domain in the interval 10–278 (RRRRTFAIIS…SLIDWAPAPK (269 aa)). Residues 19–26 (SHPDAGKT), 87–91 (DTPGH), and 141–144 (NKYD) contribute to the GTP site.

Belongs to the TRAFAC class translation factor GTPase superfamily. Classic translation factor GTPase family. PrfC subfamily.

The protein resides in the cytoplasm. Its function is as follows. Increases the formation of ribosomal termination complexes and stimulates activities of RF-1 and RF-2. It binds guanine nucleotides and has strong preference for UGA stop codons. It may interact directly with the ribosome. The stimulation of RF-1 and RF-2 is significantly reduced by GTP and GDP, but not by GMP. This Neisseria gonorrhoeae (strain ATCC 700825 / FA 1090) protein is Peptide chain release factor 3.